The sequence spans 277 residues: Inositol monophosphatase 1 (277 aa).

Mg(2+) is bound by residues glutamate 70, aspartate 90, isoleucine 92, and aspartate 93. Glutamate 70 lines the substrate pocket. A substrate-binding site is contributed by 92 to 95; sequence IDGT. Threonine 168 bears the Phosphothreonine mark. Residues 194–196, glutamate 213, and aspartate 220 each bind substrate; that span reads GTA. Aspartate 220 is a binding site for Mg(2+).

The protein belongs to the inositol monophosphatase superfamily. Homodimer. Requires Mg(2+) as cofactor.

The protein resides in the cytoplasm. It carries out the reaction a myo-inositol phosphate + H2O = myo-inositol + phosphate. The enzyme catalyses 1D-myo-inositol 1-phosphate + H2O = myo-inositol + phosphate. It catalyses the reaction 1D-myo-inositol 2-phosphate + H2O = myo-inositol + phosphate. The catalysed reaction is 1D-myo-inositol 3-phosphate + H2O = myo-inositol + phosphate. It carries out the reaction 1D-myo-inositol 4-phosphate + H2O = myo-inositol + phosphate. The enzyme catalyses 1D-myo-inositol 5-phosphate + H2O = myo-inositol + phosphate. It catalyses the reaction 1D-myo-inositol 6-phosphate + H2O = myo-inositol + phosphate. The catalysed reaction is scyllo-inositol 1-phosphate + H2O = scyllo-inositol + phosphate. It carries out the reaction alpha-D-galactose 1-phosphate + H2O = D-galactose + phosphate. The enzyme catalyses alpha-D-glucose 1-phosphate + H2O = D-glucose + phosphate. It catalyses the reaction D-glucose 6-phosphate + H2O = D-glucose + phosphate. The catalysed reaction is beta-D-fructose 1-phosphate + H2O = D-fructose + phosphate. It carries out the reaction glycerol 2-phosphate + H2O = glycerol + phosphate. The enzyme catalyses adenosine 2'-phosphate + H2O = adenosine + phosphate. The protein operates within polyol metabolism; myo-inositol biosynthesis; myo-inositol from D-glucose 6-phosphate: step 2/2. With respect to regulation, activity with myo-inositol monophosphates and D-galactose 1-phosphate is inhibited by Li(+), Ca(2+) and Mn(2+), but also by Mg(2+) at concentrations above 3 mM. Its function is as follows. Phosphatase involved in the dephosphorylation of myo-inositol monophosphates to generate myo-inositol. Is also able to dephosphorylate scyllo-inositol-phosphate, myo-inositol 1,4-diphosphate, scyllo-inositol-1,3-diphosphate and scyllo-inositol-1,4-diphosphate. Also dephosphorylates in vitro other sugar-phosphates including D-galactose-1-phosphate, glucose-1-phosphate, glucose-6-phosphate, fructose-1-phosphate, beta-glycerophosphate and 2'-AMP. Responsible for the provision of inositol required for synthesis of phosphatidylinositols and polyphosphoinositides, and involved in maintaining normal brain function. Has been implicated as the pharmacological target for lithium (Li(+)) action in brain, which is used to treat bipolar affective disorder. Is equally active with 1D-myo-inositol 1-phosphate, 1D-myo-inositol 3-phosphate and D-galactose 1-phosphate. The chain is Inositol monophosphatase 1 from Homo sapiens (Human).